The primary structure comprises 86 residues: Small ribosomal subunit protein bS20 (86 aa).

The protein belongs to the bacterial ribosomal protein bS20 family.

Functionally, binds directly to 16S ribosomal RNA. The sequence is that of Small ribosomal subunit protein bS20 from Rhodococcus erythropolis (strain PR4 / NBRC 100887).